A 581-amino-acid polypeptide reads, in one-letter code: DNA primase (581 aa).

A CHC2-type zinc finger spans residues 40–64 (CPFHNEKTPSFTVNGEKQFYHCFGC). Residues 259 to 341 (NRLLVVEGYM…GRQLRFMFLP (83 aa)) form the Toprim domain. Mg(2+)-binding residues include glutamate 265, aspartate 309, and aspartate 311.

The protein belongs to the DnaG primase family. As to quaternary structure, monomer. Interacts with DnaB. Requires Zn(2+) as cofactor. The cofactor is Mg(2+).

The catalysed reaction is ssDNA + n NTP = ssDNA/pppN(pN)n-1 hybrid + (n-1) diphosphate.. Its function is as follows. RNA polymerase that catalyzes the synthesis of short RNA molecules used as primers for DNA polymerase during DNA replication. The chain is DNA primase from Shigella flexneri.